The sequence spans 409 residues: uncharacterized protein (409 aa).

Disordered stretches follow at residues 12–32 (ENTENQKIEATEETAPTLHCP), 133–160 (EVSTQKSWSSEKNWSGLSQGPGTASREQ), and 194–213 (TVSSKAGRNPSGSPEQGLST). Residues 134-160 (VSTQKSWSSEKNWSGLSQGPGTASREQ) are compositionally biased toward polar residues.

This is an uncharacterized protein from Mus musculus (Mouse).